A 686-amino-acid polypeptide reads, in one-letter code: Proprotein convertase subtilisin/kexin type 9 (686 aa).

The N-terminal stretch at 1 to 28 (MGTVSSRRLWWPLPLLLLLLLGPAGTRA) is a signal peptide. A propeptide spanning residues 29–150 (QEDDDDDYEE…IEEDSSVFAQ (122 aa)) is cleaved from the precursor. Tyr-36 is subject to Sulfotyrosine. Position 45 is a phosphoserine (Ser-45). Positions 75–147 (TYVVVLKEET…VDYIEEDSSV (73 aa)) constitute an Inhibitor I9 domain. The region spanning 153-459 (PWNLERITPA…GWQLFCRTVW (307 aa)) is the Peptidase S8 domain. Catalysis depends on charge relay system residues Asp-184 and His-224. Intrachain disulfides connect Cys-221-Cys-253 and Cys-321-Cys-356. The Charge relay system role is filled by Ser-384. Residues 448–686 (GEGWQLFCRT…CRSQHLAQAS (239 aa)) are C-terminal domain. 3 disulfide bridges follow: Cys-455/Cys-525, Cys-475/Cys-524, and Cys-484/Cys-507. Asn-531 carries an N-linked (GlcNAc...) asparagine glycan. Cystine bridges form between Cys-532–Cys-599, Cys-550–Cys-598, Cys-560–Cys-586, Cys-606–Cys-677, Cys-624–Cys-676, and Cys-633–Cys-652. At Ser-686 the chain carries Phosphoserine.

This sequence belongs to the peptidase S8 family. As to quaternary structure, monomer. Can self-associate to form dimers and higher multimers which may have increased LDLR degrading activity. The precursor protein but not the mature protein may form multimers. Interacts with APOB, VLDLR, LRP8/APOER2 and BACE1. The full-length immature form (pro-PCSK9) interacts with SCNN1A, SCNN1B and SCNN1G. The pro-PCSK9 form (via C-terminal domain) interacts with LDLR. Interacts (via the C-terminal domain) with ANXA2 (via repeat Annexin 1); the interaction inhibits the degradation of LDLR. It depends on Ca(2+) as a cofactor. Post-translationally, cleavage by furin and PCSK5 generates a truncated inactive protein that is unable to induce LDLR degradation. Undergoes autocatalytic cleavage in the endoplasmic reticulum to release the propeptide from the N-terminus and the cleavage of the propeptide is strictly required for its maturation and activation. The cleaved propeptide however remains associated with the catalytic domain through non-covalent interactions, preventing potential substrates from accessing its active site. As a result, it is secreted from cells as a propeptide-containing, enzymatically inactive protein. In terms of processing, phosphorylation protects the propeptide against proteolysis.

It localises to the cytoplasm. The protein resides in the secreted. The protein localises to the endosome. Its subcellular location is the lysosome. It is found in the cell surface. It localises to the endoplasmic reticulum. The protein resides in the golgi apparatus. With respect to regulation, its proteolytic activity is autoinhibited by the non-covalent binding of the propeptide to the catalytic domain. Inhibited by EGTA. In terms of biological role, crucial player in the regulation of plasma cholesterol homeostasis. Binds to low-density lipid receptor family members: low density lipoprotein receptor (LDLR), very low density lipoprotein receptor (VLDLR), apolipoprotein E receptor (LRP1/APOER) and apolipoprotein receptor 2 (LRP8/APOER2), and promotes their degradation in intracellular acidic compartments. Acts via a non-proteolytic mechanism to enhance the degradation of the hepatic LDLR through a clathrin LDLRAP1/ARH-mediated pathway. May prevent the recycling of LDLR from endosomes to the cell surface or direct it to lysosomes for degradation. Can induce ubiquitination of LDLR leading to its subsequent degradation. Inhibits intracellular degradation of APOB via the autophagosome/lysosome pathway in a LDLR-independent manner. Involved in the disposal of non-acetylated intermediates of BACE1 in the early secretory pathway. Inhibits epithelial Na(+) channel (ENaC)-mediated Na(+) absorption by reducing ENaC surface expression primarily by increasing its proteasomal degradation. Regulates neuronal apoptosis via modulation of LRP8/APOER2 levels and related anti-apoptotic signaling pathways. This Saguinus labiatus (Red-chested mustached tamarin) protein is Proprotein convertase subtilisin/kexin type 9 (PCSK9).